We begin with the raw amino-acid sequence, 158 residues long: Cyclic pyranopterin monophosphate synthase (158 aa).

Residues 76–78 and 114–115 contribute to the substrate site; these read LCH and ME. D129 is an active-site residue.

The protein belongs to the MoaC family. In terms of assembly, homohexamer; trimer of dimers.

It catalyses the reaction (8S)-3',8-cyclo-7,8-dihydroguanosine 5'-triphosphate = cyclic pyranopterin phosphate + diphosphate. It functions in the pathway cofactor biosynthesis; molybdopterin biosynthesis. Its function is as follows. Catalyzes the conversion of (8S)-3',8-cyclo-7,8-dihydroguanosine 5'-triphosphate to cyclic pyranopterin monophosphate (cPMP). This Shewanella piezotolerans (strain WP3 / JCM 13877) protein is Cyclic pyranopterin monophosphate synthase.